A 393-amino-acid polypeptide reads, in one-letter code: S-adenosylmethionine synthase (393 aa).

Glu-9 is a binding site for Mg(2+). His-15 is a binding site for ATP. Position 43 (Glu-43) interacts with K(+). 2 residues coordinate L-methionine: Glu-56 and Gln-99. ATP contacts are provided by residues 167-169, 235-238, Asp-246, 252-253, Ala-269, Lys-273, and Lys-277; these read HGK, SGRF, and RK. Asp-246 is a binding site for L-methionine. Residue Lys-277 participates in L-methionine binding.

Belongs to the AdoMet synthase family. In terms of assembly, homotetramer. Mn(2+) serves as cofactor. Requires Mg(2+) as cofactor. The cofactor is Co(2+). K(+) is required as a cofactor. In terms of tissue distribution, root.

Its subcellular location is the cytoplasm. It carries out the reaction L-methionine + ATP + H2O = S-adenosyl-L-methionine + phosphate + diphosphate. The protein operates within amino-acid biosynthesis; S-adenosyl-L-methionine biosynthesis; S-adenosyl-L-methionine from L-methionine: step 1/1. Functionally, catalyzes the formation of S-adenosylmethionine from methionine and ATP. The reaction comprises two steps that are both catalyzed by the same enzyme: formation of S-adenosylmethionine (AdoMet) and triphosphate, and subsequent hydrolysis of the triphosphate. The chain is S-adenosylmethionine synthase (METK) from Pinus banksiana (Jack pine).